Here is an 84-residue protein sequence, read N- to C-terminus: Cell division topological specificity factor (84 aa).

The protein belongs to the MinE family.

Prevents the cell division inhibition by proteins MinC and MinD at internal division sites while permitting inhibition at polar sites. This ensures cell division at the proper site by restricting the formation of a division septum at the midpoint of the long axis of the cell. This Burkholderia mallei (strain NCTC 10247) protein is Cell division topological specificity factor.